The sequence spans 1009 residues: Cilia- and flagella-associated protein 70 (1009 aa).

A compositionally biased stretch (basic and acidic residues) spans 410–428 (NLKEDKPVKEKDIDGRPRP). A disordered region spans residues 410–457 (NLKEDKPVKEKDIDGRPRPGDVQAPSIKSQSSDTPLEGEPPLSHNPEG). TPR repeat units follow at residues 498-531 (PPLTRRTGGAQKAVSDYHTQIKNISRAILDEYYR), 635-668 (SEQLRLFAFEAEVNENFEMAAAYYKERLVREPQN), 669-702 (LDHWLDYGVFCLLTEDNIKAQECFRKALSLNQSH), 704-736 (HSLLLCGVLAVLLENYEQAEIFFEDATCLEPTN), 888-921 (HFIFLRLGLIYLEEKEYEKAKKTYMQACKRSPSC), 923-954 (TWLGLGIACYRLEELTEAEDALSEANALNNYN), and 956-988 (EVWAYLALVCLKVGRQLEAEQAYKYMIKLKLKD).

It belongs to the CFAP70 family.

Its subcellular location is the cell projection. The protein resides in the cilium. The protein localises to the flagellum. It is found in the cytoplasm. It localises to the cytoskeleton. Its subcellular location is the flagellum basal body. The protein resides in the cilium axoneme. In terms of biological role, axoneme-binding protein that plays a role in the regulation of ciliary motility and cilium length. The polypeptide is Cilia- and flagella-associated protein 70 (Macaca fascicularis (Crab-eating macaque)).